The primary structure comprises 182 residues: Protein transport protein gos1 (182 aa).

The Cytoplasmic portion of the chain corresponds to 1–163 (MKSMLLRDSV…RKTSIRRRRD (163 aa)). Residues 164–181 (SIILALLISVLMLLFLFF) traverse the membrane as a helical; Anchor for type IV membrane protein segment. Position 182 (His182) is a topological domain, vesicular.

Belongs to the GOSR1 family. As to quaternary structure, component of a SNARE complex consisting of sed5, gos1, ykt6, and sft1.

The protein resides in the golgi apparatus membrane. In terms of biological role, nonessential SNARE involved in retrograde transport within the Golgi complex. This chain is Protein transport protein gos1 (gos1), found in Schizosaccharomyces pombe (strain 972 / ATCC 24843) (Fission yeast).